A 346-amino-acid polypeptide reads, in one-letter code: UDP-N-acetylenolpyruvoylglucosamine reductase (346 aa).

The FAD-binding PCMH-type domain maps to 22 to 194 (GFDVRARFAC…TSVTFRLPKV (173 aa)). R170 is a catalytic residue. The active-site Proton donor is S246. E342 is an active-site residue.

Belongs to the MurB family. FAD is required as a cofactor.

The protein resides in the cytoplasm. The catalysed reaction is UDP-N-acetyl-alpha-D-muramate + NADP(+) = UDP-N-acetyl-3-O-(1-carboxyvinyl)-alpha-D-glucosamine + NADPH + H(+). Its pathway is cell wall biogenesis; peptidoglycan biosynthesis. Its function is as follows. Cell wall formation. The polypeptide is UDP-N-acetylenolpyruvoylglucosamine reductase (Paraburkholderia xenovorans (strain LB400)).